Consider the following 540-residue polypeptide: Chaperonin GroEL (540 aa).

ATP is bound by residues 29 to 32, 86 to 90, Gly413, 476 to 478, and Asp492; these read TLGP, DGTTT, and NAA.

This sequence belongs to the chaperonin (HSP60) family. In terms of assembly, forms a cylinder of 14 subunits composed of two heptameric rings stacked back-to-back. Interacts with the co-chaperonin GroES.

The protein localises to the cytoplasm. The catalysed reaction is ATP + H2O + a folded polypeptide = ADP + phosphate + an unfolded polypeptide.. In terms of biological role, together with its co-chaperonin GroES, plays an essential role in assisting protein folding. The GroEL-GroES system forms a nano-cage that allows encapsulation of the non-native substrate proteins and provides a physical environment optimized to promote and accelerate protein folding. The sequence is that of Chaperonin GroEL from Geobacillus thermodenitrificans (strain NG80-2).